Here is a 148-residue protein sequence, read N- to C-terminus: UPF0260 protein mll2411 (148 aa).

Belongs to the UPF0260 family.

The protein is UPF0260 protein mll2411 of Mesorhizobium japonicum (strain LMG 29417 / CECT 9101 / MAFF 303099) (Mesorhizobium loti (strain MAFF 303099)).